A 593-amino-acid polypeptide reads, in one-letter code: Lipolysis-stimulated lipoprotein receptor (593 aa).

The signal sequence occupies residues 1 to 35; sequence MAPAAGACAGAPDSHPATVVFVCLFLIIFCPDPAS. Residues 36–206 lie on the Extracellular side of the membrane; sequence AIQVTVSDPY…PGFRAGPLED (171 aa). Residues 89 to 181 form the Ig-like V-type domain; the sequence is PASVDNQLNA…DLDGNNEAYA (93 aa). A disulfide bond links C113 and C165. A helical transmembrane segment spans residues 207 to 227; it reads WLFVVVVCLASLLLFLLLGIC. Residues 228-593 are Cytoplasmic-facing; it reads WCQCCPHTCC…LALSRESLVV (366 aa). T283 carries the post-translational modification Phosphothreonine. 5 positions are modified to phosphoserine: S308, S314, S332, S375, and S379. Basic and acidic residues predominate over residues 375 to 387; the sequence is SEVTSLHEDDWRS. The segment at 375-578 is disordered; that stretch reads SEVTSLHEDD…ETDSQASRER (204 aa). T396 is subject to Phosphothreonine. Residues S407, S410, and S436 each carry the phosphoserine modification. Positions 435–444 are enriched in basic and acidic residues; sequence RSVDALDDIN. Residues 445 to 460 show a composition bias toward low complexity; it reads RPGSTESGRSSPPSSG. Residues S471 and S473 each carry the phosphoserine modification. The span at 472–550 shows a compositional bias: basic and acidic residues; it reads RSRDDLYDPD…GSGERRRVYR (79 aa). The residue at position 478 (Y478) is a Phosphotyrosine. S575 is subject to Phosphoserine. K582 is covalently cross-linked (Glycyl lysine isopeptide (Lys-Gly) (interchain with G-Cter in ubiquitin)). Residues S587 and S590 each carry the phosphoserine modification.

The protein belongs to the immunoglobulin superfamily. LISCH7 family. Homotrimer or homotetramer constituted of isoform 1 and/or isoform 2 and isoform 3. Assembles into cell-cell contacts. Interacts (via the cytoplasmic domain) with MARVELD2 (via C-terminal cytoplasmic domain); the interaction is required to recruit MARVELD2 to tricellular contacts. Interacts with OCLN. In terms of processing, phosphorylation at Ser-308 by MAPK8/JNK1 and MAPK9/JNK2 may be required for exclusive localization at tricellular tight junstions. Polyubiquitinated at Lys-582 via 'Lys-63'-linked ubiquitin chains; deubiquitinated by USP53. As to expression, specifically expressed in liver. Also detected in kidney and lung.

It localises to the cell membrane. The protein localises to the cell junction. Its subcellular location is the tight junction. In terms of biological role, probable role in the clearance of triglyceride-rich lipoprotein from blood. Binds chylomicrons, LDL and VLDL in presence of free fatty acids and allows their subsequent uptake in the cells. Maintains epithelial barrier function by recruiting MARVELD2/tricellulin to tricellular tight junctions. This Rattus norvegicus (Rat) protein is Lipolysis-stimulated lipoprotein receptor.